The primary structure comprises 314 residues: Taste receptor type 2 member 42 (314 aa).

The Extracellular portion of the chain corresponds to 1 to 7; it reads MATELDK. A helical membrane pass occupies residues 8-28; sequence IFLILAIAEFIISMLGNVFIG. Residues 29-50 lie on the Cytoplasmic side of the membrane; it reads LVNCSEGIKNQKVFSADFILTC. The chain crosses the membrane as a helical span at residues 51 to 71; the sequence is LAISTIGQLLVILFDSFLVGL. Over 72 to 101 the chain is Extracellular; the sequence is ASHLYTTYRLGKTVIMLWHMTNHLTTWLAT. The helical transmembrane segment at 102-122 threads the bilayer; that stretch reads CLSIFYFFKIAHFPHSLFLWL. The Cytoplasmic segment spans residues 123 to 127; the sequence is RWRMN. Residues 128-148 form a helical membrane-spanning segment; the sequence is GMIVMLLILSLFLLIFDSLVL. The Extracellular segment spans residues 149–187; that stretch reads EIFIDISLNIIDKSNLTLYLDESKTLYDKLSILKTLLSL. Asn163 is a glycosylation site (N-linked (GlcNAc...) asparagine). A helical transmembrane segment spans residues 188–208; it reads TSFIPFSLFLTSLLFLFLSLV. At 209 to 238 the chain is on the cytoplasmic side; it reads RHTRNLKLSSLGSRDSSTEAHRRAMKMVMS. Residues 239–259 form a helical membrane-spanning segment; that stretch reads FLFLFIVHFFSLQVANWIFFM. Over 260–265 the chain is Extracellular; that stretch reads LWNNKC. Residues 266–286 form a helical membrane-spanning segment; that stretch reads IKFVMLALNAFPSCHSFILIL. At 287–314 the chain is on the cytoplasmic side; the sequence is GNSKLQQTAVRLLWHLRNYTKTPNPLPL.

The protein belongs to the G-protein coupled receptor T2R family.

Its subcellular location is the membrane. In terms of biological role, receptor that may play a role in the perception of bitterness and is gustducin-linked. May play a role in sensing the chemical composition of the gastrointestinal content. The activity of this receptor may stimulate alpha gustducin, mediate PLC-beta-2 activation and lead to the gating of TRPM5. In Homo sapiens (Human), this protein is Taste receptor type 2 member 42 (TAS2R42).